Here is a 1230-residue protein sequence, read N- to C-terminus: Cullin-associated NEDD8-dissociated protein 1 (1230 aa).

An N-acetylalanine modification is found at alanine 2. HEAT repeat units lie at residues alanine 2–isoleucine 39, aspartate 44–glutamate 81, glutamine 83–proline 119, cysteine 131–glutamine 165, asparagine 171–asparagine 208, valine 210–histidine 247, arginine 248–phenylalanine 282, glutamate 289–glutamate 366, glutamate 370–proline 407, proline 424–glycine 467, glutamine 471–proline 510, and proline 515–proline 552. N6-acetyllysine is present on lysine 55. Positions aspartate 315–aspartate 344 are disordered. At serine 335 the chain carries Phosphoserine. The residue at position 558 (serine 558) is a Phosphoserine. HEAT repeat units follow at residues proline 563–aspartate 602, proline 606–aspartate 643, proline 646–aspartate 683, alanine 688–serine 725, lysine 729–asparagine 768, leucine 770–arginine 808, alanine 809–valine 845, serine 852–proline 889, glutamate 890–proline 927, tyrosine 928–leucine 960, isoleucine 961–glutamine 998, proline 1002–serine 1039, aspartate 1043–leucine 1097, arginine 1099–leucine 1133, and glutamine 1140–alanine 1189. Lysine 971 bears the N6-acetyllysine mark.

This sequence belongs to the CAND family. In terms of assembly, interacts with TBP. Part of a complex that contains CUL1 and RBX1. Interacts with unneddylated cullins: interacts with CUL1, CUL2, CUL3, CUL4A, CUL4B and CUL5. Does not bind neddylated CUL1. Interaction with cullins is abolished in presence of COMMD1, which antagonizes with CAND1 for interacting with cullins. Interacts with ERCC6. Interacts with DCUN1D1, DCUN1D2, DCUN1D3, DCUN1D4 and DCUN1D5; these interactions are bridged by cullins and strongly inhibits the neddylation of cullins. As to expression, detected in heart, brain, spleen, liver, skeletal muscle, kidney and testis.

The protein resides in the cytoplasm. Its subcellular location is the nucleus. Key assembly factor of SCF (SKP1-CUL1-F-box protein) E3 ubiquitin ligase complexes that promotes the exchange of the substrate-recognition F-box subunit in SCF complexes, thereby playing a key role in the cellular repertoire of SCF complexes. Acts as a F-box protein exchange factor. The exchange activity of CAND1 is coupled with cycles of neddylation conjugation: in the deneddylated state, cullin-binding CAND1 binds CUL1-RBX1, increasing dissociation of the SCF complex and promoting exchange of the F-box protein. Probably plays a similar role in other cullin-RING E3 ubiquitin ligase complexes. May indirectly enhance transcription from various types of promoters. The protein is Cullin-associated NEDD8-dissociated protein 1 (Cand1) of Rattus norvegicus (Rat).